The sequence spans 1221 residues: Deubiquitinating protein VCPIP1 (1221 aa).

Residues 1 to 19 (MSQPPPPPPLPPPPPPPEA) show a composition bias toward pro residues. Positions 1 to 40 (MSQPPPPPPLPPPPPPPEAPQTSSSLAAAATPGGLSKRRD) are disordered. The region spanning 207 to 360 (LIPVHVDGDG…RNHYIPLVGI (154 aa)) is the OTU domain. D215 is a catalytic residue. The active-site Nucleophile is C218. Residue H353 is part of the active site. K407 carries the post-translational modification N6-acetyllysine. Disordered stretches follow at residues 724–778 (SVMQ…KIRI) and 988–1009 (EATT…GSGG). 2 positions are modified to phosphoserine: S746 and S756. A compositionally biased stretch (low complexity) spans 754–770 (PSSAPATPTKAPYSPTT). Phosphothreonine is present on T762. 4 positions are modified to phosphoserine: S767, S993, S997, and S1076. Disordered regions lie at residues 1117–1177 (ASMD…TDSR) and 1189–1221 (RSKA…MDHS). The span at 1143–1156 (VSSSVRPGNLQTGL) shows a compositional bias: polar residues. Over residues 1162 to 1173 (LTGGTENLNTET) the composition is skewed to low complexity. Phosphoserine is present on residues S1197 and S1206. Positions 1198–1208 (MEEPEEMDSQD) are enriched in acidic residues. The segment covering 1209 to 1221 (AETTNTTEPMDHS) has biased composition (polar residues).

As to quaternary structure, binds VCP and the ternary complex containing STX5A, NSFL1C and VCP. Post-translationally, phosphorylated at Ser-1206 by ATM or ATR following induction of covalent DNA-protein cross-links (DPCs). Widely expressed.

The protein resides in the nucleus. It localises to the cytoplasm. The protein localises to the endoplasmic reticulum. Its subcellular location is the golgi apparatus. It is found in the golgi stack. It carries out the reaction Thiol-dependent hydrolysis of ester, thioester, amide, peptide and isopeptide bonds formed by the C-terminal Gly of ubiquitin (a 76-residue protein attached to proteins as an intracellular targeting signal).. Functionally, deubiquitinating enzyme involved in DNA repair and reassembly of the Golgi apparatus and the endoplasmic reticulum following mitosis. Necessary for VCP-mediated reassembly of Golgi stacks after mitosis. Plays a role in VCP-mediated formation of transitional endoplasmic reticulum (tER). Mediates dissociation of the ternary complex containing STX5A, NSFL1C and VCP. Also involved in DNA repair following phosphorylation by ATM or ATR: acts by catalyzing deubiquitination of SPRTN, thereby promoting SPRTN recruitment to chromatin and subsequent proteolytic cleavage of covalent DNA-protein cross-links (DPCs). Hydrolyzes 'Lys-11'- and 'Lys-48'-linked polyubiquitin chains. This is Deubiquitinating protein VCPIP1 from Rattus norvegicus (Rat).